The chain runs to 467 residues: UDP-N-acetylmuramoylalanine--D-glutamate ligase (467 aa).

An ATP-binding site is contributed by 121–127 (GTNGKST).

This sequence belongs to the MurCDEF family.

The protein resides in the cytoplasm. The catalysed reaction is UDP-N-acetyl-alpha-D-muramoyl-L-alanine + D-glutamate + ATP = UDP-N-acetyl-alpha-D-muramoyl-L-alanyl-D-glutamate + ADP + phosphate + H(+). The protein operates within cell wall biogenesis; peptidoglycan biosynthesis. Cell wall formation. Catalyzes the addition of glutamate to the nucleotide precursor UDP-N-acetylmuramoyl-L-alanine (UMA). This chain is UDP-N-acetylmuramoylalanine--D-glutamate ligase, found in Chelativorans sp. (strain BNC1).